The primary structure comprises 1240 residues: DNA-directed RNA polymerase subunit beta (1240 aa).

The protein belongs to the RNA polymerase beta chain family. In terms of assembly, the RNAP catalytic core consists of 2 alpha, 1 beta, 1 beta' and 1 omega subunit. When a sigma factor is associated with the core the holoenzyme is formed, which can initiate transcription.

It catalyses the reaction RNA(n) + a ribonucleoside 5'-triphosphate = RNA(n+1) + diphosphate. In terms of biological role, DNA-dependent RNA polymerase catalyzes the transcription of DNA into RNA using the four ribonucleoside triphosphates as substrates. The sequence is that of DNA-directed RNA polymerase subunit beta from Phytoplasma australiense.